The primary structure comprises 60 residues: Acidic phospholipase A2 (60 aa).

Positions 27, 29, and 31 each coordinate Ca(2+). Cys-28 and Cys-44 are joined by a disulfide. The active site involves His-47. Asp-48 lines the Ca(2+) pocket.

Belongs to the phospholipase A2 family. Group II subfamily. D49 sub-subfamily. Monomer. It depends on Ca(2+) as a cofactor. In terms of tissue distribution, expressed by the venom gland.

It is found in the secreted. It carries out the reaction a 1,2-diacyl-sn-glycero-3-phosphocholine + H2O = a 1-acyl-sn-glycero-3-phosphocholine + a fatty acid + H(+). Snake venom phospholipase A2 (PLA2) that exhibits an indirect hemolytic activity, a low myotoxicity, and induces edema. In addition, this enzyme has been shown to induce the release of some pro- and anti-inflammatory cytokines from human PBMC (IL12B, TNF-alpha, IL1B and IL6 but not variation has been observed for IL-8 and IL-10). PLA2 catalyzes the calcium-dependent hydrolysis of the 2-acyl groups in 3-sn-phosphoglycerides. This is Acidic phospholipase A2 from Bothrops leucurus (Whitetail lancehead).